A 314-amino-acid chain; its full sequence is GMP synthase [glutamine-hydrolyzing] subunit B (314 aa).

Residues 2–186 (FDPKKFVEEA…LGIPDEIVER (185 aa)) form the GMPS ATP-PPase domain. ATP is bound at residue 29 to 35 (SGGVDST).

In terms of assembly, heterodimer composed of a glutamine amidotransferase subunit (A) and a GMP-binding subunit (B).

The catalysed reaction is XMP + L-glutamine + ATP + H2O = GMP + L-glutamate + AMP + diphosphate + 2 H(+). Its pathway is purine metabolism; GMP biosynthesis; GMP from XMP (L-Gln route): step 1/1. Its function is as follows. Catalyzes the synthesis of GMP from XMP. The polypeptide is GMP synthase [glutamine-hydrolyzing] subunit B (guaAB) (Methanopyrus kandleri (strain AV19 / DSM 6324 / JCM 9639 / NBRC 100938)).